We begin with the raw amino-acid sequence, 432 residues long: Anaerobic glycerol-3-phosphate dehydrogenase subunit B (432 aa).

This sequence belongs to the anaerobic G-3-P dehydrogenase subunit B family. As to quaternary structure, composed of a catalytic GlpA/B dimer and of membrane bound GlpC. FMN serves as cofactor.

The catalysed reaction is a quinone + sn-glycerol 3-phosphate = dihydroxyacetone phosphate + a quinol. It participates in polyol metabolism; glycerol degradation via glycerol kinase pathway; glycerone phosphate from sn-glycerol 3-phosphate (anaerobic route): step 1/1. Its function is as follows. Conversion of glycerol 3-phosphate to dihydroxyacetone. Uses fumarate or nitrate as electron acceptor. In Haemophilus influenzae (strain ATCC 51907 / DSM 11121 / KW20 / Rd), this protein is Anaerobic glycerol-3-phosphate dehydrogenase subunit B (glpB).